A 442-amino-acid chain; its full sequence is Choline monooxygenase, chloroplastic (442 aa).

Residues 1–58 constitute a chloroplast transit peptide; the sequence is MASSASMLINYPTTFCGVRNSSNPNNDQFSDQINIPSSLNNNINISKITSKTNKIIPK. The Rieske domain occupies 123-229; it reads WQVAGYSDQI…VAIWGPFVLI (107 aa). Residues Cys165, His167, Cys184, and His187 each coordinate [2Fe-2S] cluster. 2 residues coordinate Fe cation: His290 and His295.

It belongs to the choline monooxygenase family. [2Fe-2S] cluster is required as a cofactor. It depends on Fe cation as a cofactor. Mg(2+) serves as cofactor.

The protein resides in the plastid. It localises to the chloroplast stroma. The enzyme catalyses choline + 2 reduced [2Fe-2S]-[ferredoxin] + O2 + 2 H(+) = betaine aldehyde hydrate + 2 oxidized [2Fe-2S]-[ferredoxin] + H2O. It functions in the pathway amine and polyamine biosynthesis; betaine biosynthesis via choline pathway; betaine aldehyde from choline (monooxygenase route): step 1/1. Its function is as follows. Catalyzes the first step of the osmoprotectant glycine betaine synthesis. This Amaranthus tricolor (Joseph's coat) protein is Choline monooxygenase, chloroplastic (CMO).